The chain runs to 114 residues: Hemerythrin subunit 2 (114 aa).

Fe cation-binding residues include His26, His55, Glu59, His74, His78, His102, and Asp107.

This sequence belongs to the hemerythrin family.

In terms of biological role, hemerythrin is a respiratory protein in blood cells of certain marine worms. The oxygen-binding site in each chain contains two iron atoms. The chain is Hemerythrin subunit 2 from Golfingia vulgaris (Marine worm).